The primary structure comprises 156 residues: ATP synthase subunit b (156 aa).

The chain crosses the membrane as a helical span at residues Leu7–Pro27.

The protein belongs to the ATPase B chain family. In terms of assembly, F-type ATPases have 2 components, F(1) - the catalytic core - and F(0) - the membrane proton channel. F(1) has five subunits: alpha(3), beta(3), gamma(1), delta(1), epsilon(1). F(0) has three main subunits: a(1), b(2) and c(10-14). The alpha and beta chains form an alternating ring which encloses part of the gamma chain. F(1) is attached to F(0) by a central stalk formed by the gamma and epsilon chains, while a peripheral stalk is formed by the delta and b chains.

Its subcellular location is the cell inner membrane. F(1)F(0) ATP synthase produces ATP from ADP in the presence of a proton or sodium gradient. F-type ATPases consist of two structural domains, F(1) containing the extramembraneous catalytic core and F(0) containing the membrane proton channel, linked together by a central stalk and a peripheral stalk. During catalysis, ATP synthesis in the catalytic domain of F(1) is coupled via a rotary mechanism of the central stalk subunits to proton translocation. In terms of biological role, component of the F(0) channel, it forms part of the peripheral stalk, linking F(1) to F(0). This chain is ATP synthase subunit b, found in Neisseria meningitidis serogroup C (strain 053442).